Here is a 497-residue protein sequence, read N- to C-terminus: tRNA (adenine(58)-N(1))-methyltransferase non-catalytic subunit TRM6 (497 aa).

The segment at 81-103 (LEEPASETKEAGTDNRNIVDDGK) is disordered. Residues 95–105 (NRNIVDDGKSQ) form a substrate region. Residue Thr-108 is modified to Phosphothreonine. Substrate regions lie at residues 146 to 155 (KYIKKKKKKY) and 176 to 183 (REPGKINH). A disordered region spans residues 275-354 (MLSSEPKDST…EKQRRQEEQR (80 aa)). Residues 289–307 (SNGELEEKEIAEQADEDNI) show a composition bias toward acidic residues. Positions 328–354 (PENKEPKEKRSKRDYIQEKQRRQEEQR) are enriched in basic and acidic residues. Residues Arg-349 and Arg-377 each contribute to the substrate site. Substrate stretches follow at residues 415–423 (RERGGVINL) and 434–441 (QVLPDRSH). The interval 474–497 (TGALDPHKAEEPAAKKQKCMESAS) is disordered. The segment covering 478-487 (DPHKAEEPAA) has biased composition (basic and acidic residues).

Belongs to the TRM6/GCD10 family. Heterotetramer; composed of two copies of TRMT6 and two copies of TRMT61A.

The protein resides in the nucleus. Functionally, substrate-binding subunit of tRNA (adenine-N(1)-)-methyltransferase, which catalyzes the formation of N(1)-methyladenine at position 58 (m1A58) in initiator methionyl-tRNA. Together with the TRMT61A catalytic subunit, part of a mRNA N(1)-methyltransferase complex that mediates methylation of adenosine residues at the N(1) position of a small subset of mRNAs: N(1) methylation takes place in tRNA T-loop-like structures of mRNAs and is only present at low stoichiometries. The chain is tRNA (adenine(58)-N(1))-methyltransferase non-catalytic subunit TRM6 (Trmt6) from Mus musculus (Mouse).